Reading from the N-terminus, the 293-residue chain is CDP-abequose synthase (293 aa).

Thr113 is a substrate binding site. Tyr130 serves as the catalytic Proton acceptor.

This sequence belongs to the NAD(P)-dependent epimerase/dehydratase family.

It carries out the reaction CDP-alpha-D-abequose + NADP(+) = CDP-4-dehydro-3,6-dideoxy-alpha-D-glucose + NADPH + H(+). Its pathway is bacterial outer membrane biogenesis; LPS O-antigen biosynthesis. The chain is CDP-abequose synthase from Salmonella muenchen.